The following is a 134-amino-acid chain: Large ribosomal subunit protein bL17 (134 aa).

The protein belongs to the bacterial ribosomal protein bL17 family. Part of the 50S ribosomal subunit. Contacts protein L32.

The sequence is that of Large ribosomal subunit protein bL17 from Aromatoleum aromaticum (strain DSM 19018 / LMG 30748 / EbN1) (Azoarcus sp. (strain EbN1)).